An 84-amino-acid chain; its full sequence is Esculentin-1B (84 aa).

Residues 1-22 (MFTLKKPLLLIVLLGMISLSLC) form the signal peptide. A propeptide spanning residues 23–38 (EQERNADEEEGSEIKR) is cleaved from the precursor. Cysteines 78 and 84 form a disulfide.

This sequence belongs to the frog skin active peptide (FSAP) family. Brevinin subfamily. Expressed by the skin glands.

The protein localises to the secreted. Shows antibacterial activity against representative Gram-negative and Gram-positive bacterial species, and hemolytic activity. This Pelophylax lessonae (Pool frog) protein is Esculentin-1B.